The chain runs to 393 residues: MLRFSTAGESHGESLIALVSGMPAGVPIDQDFVNRELWRRQQGYGRGGRMRIEQDTAHFLSGVRHGKTIGSPIAMEIENRDWKNWTEILPVETGDASKHKAVASPRPGHADLAGALKYDFAEARYVLERASARESTARVAAGAVAKSLLLELGIDVASHVVRVGNVEMERTATWAEIAALRELDEVMLGCVDAETEARMKAEVDRALLTKDTIGGVFEVVVHGAPAGIGTYANWDERLDGVLAQAVMSLQAVKAVEIGRGVTAAASMGSDVHDAIGYAAELPEGAHTRFTRERNNAGGIEGGISNGEDVVVRGYLKPISTLRQPLASVRFDTREETKAAYERSDVCVVPAAGVAAEAMVALAFGRLLLEKFGGDSLRELKRNYDGYLEQIRRF.

The NADP(+) site is built by Arg40 and Arg46. FMN-binding positions include 129–131 (RAS), 250–251 (QA), Gly301, 316–320 (KPIST), and Arg342.

It belongs to the chorismate synthase family. Homotetramer. FMNH2 serves as cofactor.

It catalyses the reaction 5-O-(1-carboxyvinyl)-3-phosphoshikimate = chorismate + phosphate. Its pathway is metabolic intermediate biosynthesis; chorismate biosynthesis; chorismate from D-erythrose 4-phosphate and phosphoenolpyruvate: step 7/7. In terms of biological role, catalyzes the anti-1,4-elimination of the C-3 phosphate and the C-6 proR hydrogen from 5-enolpyruvylshikimate-3-phosphate (EPSP) to yield chorismate, which is the branch point compound that serves as the starting substrate for the three terminal pathways of aromatic amino acid biosynthesis. This reaction introduces a second double bond into the aromatic ring system. This Acidobacterium capsulatum (strain ATCC 51196 / DSM 11244 / BCRC 80197 / JCM 7670 / NBRC 15755 / NCIMB 13165 / 161) protein is Chorismate synthase.